Here is a 295-residue protein sequence, read N- to C-terminus: HTH-type transcriptional regulator TdfR (295 aa).

An HTH lysR-type domain is found at 1 to 58 (MEFRQLRYFVAAAEEGNVGAAARRLHISQPPVTRQIHALEQHLGVLLFERSARGVQLT). The H-T-H motif DNA-binding region spans 18 to 37 (VGAAARRLHISQPPVTRQIH).

It belongs to the LysR transcriptional regulatory family.

The protein resides in the cytoplasm. In terms of biological role, involved in the regulation of 3-chlorocatechol degradation. Transcriptional regulator of tfdB expression. Acts as a repressor in the absence of its effector (either 2-cis-chlorodiene lactone or chloromaleylacetate) but acts as an activator when its effector is present. This chain is HTH-type transcriptional regulator TdfR (tfdR), found in Cupriavidus pinatubonensis (strain JMP 134 / LMG 1197) (Cupriavidus necator (strain JMP 134)).